Consider the following 825-residue polypeptide: Endochitinase A1 (825 aa).

The first 22 residues, 1–22, serve as a signal peptide directing secretion; it reads MVSSKLSFVATAVAALAPLASA. Residues 29–338 enclose the GH18 domain; it reads SNLAIYWGQG…DHMKDILLHC (310 aa). The Proton donor role is filled by Glu174. Disordered regions lie at residues 338 to 568, 680 to 736, and 750 to 792; these read CDPS…TTTA, PVTE…VSTS, and PLIL…YTQE. Low complexity predominate over residues 344–554; sequence VTSSSAVPSS…STDESSTTVG (211 aa). Asn559 carries N-linked (GlcNAc...) asparagine glycosylation. Polar residues predominate over residues 701 to 712; the sequence is EGSNPTQPSGAS. N-linked (GlcNAc...) asparagine glycosylation is present at Asn717. The segment covering 772-792 has biased composition (polar residues); that stretch reads PSGQNSGSSSHVPIPPSYTQE. Gly800 carries GPI-anchor amidated glycine lipidation. Residues 801–825 constitute a propeptide, removed in mature form; it reads AASRVTGLGHGLVLTVLTLSAFFVL.

This sequence belongs to the glycosyl hydrolase 18 family. Chitinase class III subfamily. O-mannosylated by pmt4.

Its subcellular location is the cell membrane. It localises to the secreted. The protein resides in the cell wall. It catalyses the reaction Random endo-hydrolysis of N-acetyl-beta-D-glucosaminide (1-&gt;4)-beta-linkages in chitin and chitodextrins.. The cyclic peptide natural product argifin acts as a specific inhibitor. In terms of biological role, GPI-anchored chitinase involved in the degradation of chitin, a component of the cell walls of fungi and exoskeletal elements of some animals (including worms and arthropods). Required to reshape the cell wall at the sites where cell wall remodeling and/or cell wall maturation actively take place such as sites of conidia formation. The polypeptide is Endochitinase A1 (chiA1) (Aspergillus fumigatus (Neosartorya fumigata)).